We begin with the raw amino-acid sequence, 64 residues long: Metallothionein (64 aa).

It belongs to the metallothionein superfamily. Type 4 family.

Functionally, metallothioneins have a high content of cysteine residues that bind various heavy metals. The protein is Metallothionein of Sterechinus neumayeri (Antarctic sea urchin).